We begin with the raw amino-acid sequence, 485 residues long: Aspartyl/glutamyl-tRNA(Asn/Gln) amidotransferase subunit B (485 aa).

This sequence belongs to the GatB/GatE family. GatB subfamily. As to quaternary structure, heterotrimer of A, B and C subunits.

It catalyses the reaction L-glutamyl-tRNA(Gln) + L-glutamine + ATP + H2O = L-glutaminyl-tRNA(Gln) + L-glutamate + ADP + phosphate + H(+). It carries out the reaction L-aspartyl-tRNA(Asn) + L-glutamine + ATP + H2O = L-asparaginyl-tRNA(Asn) + L-glutamate + ADP + phosphate + 2 H(+). Allows the formation of correctly charged Asn-tRNA(Asn) or Gln-tRNA(Gln) through the transamidation of misacylated Asp-tRNA(Asn) or Glu-tRNA(Gln) in organisms which lack either or both of asparaginyl-tRNA or glutaminyl-tRNA synthetases. The reaction takes place in the presence of glutamine and ATP through an activated phospho-Asp-tRNA(Asn) or phospho-Glu-tRNA(Gln). The sequence is that of Aspartyl/glutamyl-tRNA(Asn/Gln) amidotransferase subunit B from Cupriavidus taiwanensis (strain DSM 17343 / BCRC 17206 / CCUG 44338 / CIP 107171 / LMG 19424 / R1) (Ralstonia taiwanensis (strain LMG 19424)).